We begin with the raw amino-acid sequence, 359 residues long: 4-galactosyl-N-acetylglucosaminide 3-alpha-L-fucosyltransferase 9 (359 aa).

Topologically, residues 1-11 are cytoplasmic; sequence MTSTSKGILRP. A helical; Signal-anchor for type II membrane protein transmembrane segment spans residues 12 to 32; that stretch reads FLIVCIILGCFVACLLIYIKP. At 33 to 359 the chain is on the lumenal side; the sequence is TNSWVFSPME…VGNLEKWFWN (327 aa). N-linked (GlcNAc...) asparagine glycosylation occurs at Asn-62. The segment at 63–168 is acceptor-binding; that stretch reads ETTILVWVWP…RRDSDIQVPY (106 aa). Gln-75 contributes to the a beta-D-galactosyl-(1-&gt;4)-N-acetyl-beta-D-glucosaminyl derivative binding site. Disulfide bonds link Cys-82-Cys-335, Cys-91-Cys-338, and Cys-190-Cys-238. Asn-101 carries an N-linked (GlcNAc...) asparagine glycan. Glu-137 contributes to the a beta-D-galactosyl-(1-&gt;4)-N-acetyl-beta-D-glucosaminyl derivative binding site. Glu-137 (nucleophile) is an active-site residue. Position 137 (Glu-137) interacts with GDP-beta-L-fucose. Asn-153 carries N-linked (GlcNAc...) asparagine glycosylation. 11 residues coordinate GDP-beta-L-fucose: Tyr-168, Val-192, Ser-194, Asn-195, Arg-202, Val-226, Tyr-241, Asn-246, Tyr-252, Glu-255, and Lys-256. Residues 169 to 326 form a donor-binding region; sequence GFLTVSTSPF…NWRKDFTVNL (158 aa). Residues 327 to 359 are acceptor-binding; the sequence is PRFWESHACLACDHVKRHQEYKSVGNLEKWFWN.

The protein belongs to the glycosyltransferase 10 family. Homodimer. N-glycosylated with complex-type N-glycans.

The protein resides in the golgi apparatus. Its subcellular location is the trans-Golgi network membrane. The protein localises to the golgi apparatus membrane. The catalysed reaction is a beta-D-galactosyl-(1-&gt;4)-N-acetyl-beta-D-glucosaminyl derivative + GDP-beta-L-fucose = a beta-D-galactosyl-(1-&gt;4)-[alpha-L-fucosyl-(1-&gt;3)]-N-acetyl-beta-D-glucosaminyl derivative + GDP + H(+). It catalyses the reaction an alpha-Neu5Ac-(2-&gt;3)-beta-D-Gal-(1-&gt;4)-beta-D-GlcNAc-(1-&gt;3)-beta-D-Gal-(1-&gt;4)-beta-D-GlcNAc derivative + GDP-beta-L-fucose = an alpha-Neu5Ac-(2-&gt;3)-beta-D-Gal-(1-&gt;4)-beta-D-GlcNAc-(1-&gt;3)-beta-D-Gal-(1-&gt;4)-[alpha-L-Fuc-(1-&gt;3)]-beta-D-GlcNAc derivative + GDP + H(+). It carries out the reaction alpha-N-glycoloylneuraminosyl-(2-&gt;3)-beta-D-galactosyl-(1-&gt;4)-N-acetyl-beta-D-glucosaminyl-(1-&gt;3)-beta-D-galactosyl-(1-&gt;4)-N-acetyl-beta-D-glucosaminyl-(1-&gt;3)-beta-D-galactosyl-(1-&gt;4)-beta-D-glucosyl-(1&lt;-&gt;1')-ceramide + GDP-beta-L-fucose = alpha-N-glycoloylneuraminosyl-(2-&gt;3)-beta-D-galactosyl-(1-&gt;4)-N-acetyl-beta-D-glucosaminyl-(1-&gt;3)-beta-D-galactosyl-(1-&gt;4)-[alpha-L-fucosyl-(1-&gt;3)]-N-acetyl-beta-D-glucosaminyl-(1-&gt;3)-beta-D-galactosyl-(1-&gt;4)-beta-D-glucosyl-(1&lt;-&gt;1')-ceramide + GDP + H(+). The enzyme catalyses alpha-D-galactosyl-(1-&gt;3)-beta-D-galactosyl-(1-&gt;4)-N-acetyl-beta-D-glucosaminyl-(1-&gt;3)-beta-D-galactosyl-(1-&gt;4)-beta-D-glucosyl-(1&lt;-&gt;1')-ceramide + GDP-beta-L-fucose = a neolactoside IV(3)-alpha-Gal,III(3)-alpha-Fuc-nLc4Cer + GDP + H(+). The catalysed reaction is a neolactoside nLc4Cer + GDP-beta-L-fucose = a neolactoside III(3)-alpha-Fuc-nLc4Cer + GDP + H(+). It catalyses the reaction an N-acetyl-alpha-neuraminyl-(2-&gt;3)-beta-D-galactosyl-(1-&gt;4)-N-acetyl-beta-D-glucosaminyl derivative + GDP-beta-L-fucose = an alpha-Neu5Ac-(2-&gt;3)-beta-D-Gal-(1-&gt;4)-[alpha-L-Fuc-(1-&gt;3)]-beta-D-GlcNAc derivative + GDP + H(+). It carries out the reaction beta-D-Gal-(1-&gt;4)-beta-D-GlcNAc-(1-&gt;3)-beta-D-Gal-(1-&gt;4)-D-Glc + GDP-beta-L-fucose = beta-D-Gal-(1-&gt;4)-[alpha-L-Fuc-(1-&gt;3)]-beta-D-GlcNAc-(1-&gt;3)-beta-D-Gal-(1-&gt;4)-D-Glc + GDP + H(+). The enzyme catalyses an alpha-L-Fuc-(1-&gt;2)-beta-D-Gal-(1-&gt;4)-beta-D-GlcNAc derivative + GDP-beta-L-fucose = an alpha-L-Fuc-(1-&gt;2)-beta-D-Gal-(1-&gt;4)-[alpha-L-Fuc-(1-&gt;3)]-beta-D-GlcNAc derivative + GDP + H(+). The protein operates within protein modification; protein glycosylation. Its pathway is glycolipid biosynthesis. Activated by Mn2+. In terms of biological role, catalyzes alpha(1-&gt;3) linkage of fucosyl moiety transferred from GDP-beta-L-fucose to N-acetyl glucosamine (GlcNAc) within type 2 lactosamine (LacNAc, beta-D-Gal-(1-&gt;4)-beta-D-GlcNAc-) glycan attached to glycolipids and N- or O-linked glycoproteins. Fucosylates distal type 2 LacNAc and its fucosylated (H-type 2 LacNAc) and sialylated (sialyl-type 2 LacNAc) derivatives to form Lewis x (Lex) (CD15) and Lewis y (Ley) antigenic epitopes involved in cell adhesion and differentiation. Generates Lex epitopes in the brain, presumably playing a role in the maintenance of neuronal stemness and neurite outgrowth in progenitor neural cells. Fucosylates the internal type 2 LacNAc unit of the polylactosamine chain to form VIM-2 antigen that serves as recognition epitope for SELE. Can also modify milk oligosaccharides in particular type 2 tetrasaccharide LNnT. The sequence is that of 4-galactosyl-N-acetylglucosaminide 3-alpha-L-fucosyltransferase 9 from Rattus norvegicus (Rat).